The chain runs to 201 residues: Flavin prenyltransferase UbiX (201 aa).

FMN-binding positions include glycine 23–serine 25, serine 49, serine 103–threonine 106, and arginine 138. 2 residues coordinate dimethylallyl phosphate: tyrosine 168 and lysine 184.

Belongs to the UbiX/PAD1 family.

It carries out the reaction dimethylallyl phosphate + FMNH2 = prenylated FMNH2 + phosphate. In terms of biological role, flavin prenyltransferase that catalyzes the synthesis of the prenylated FMN cofactor (prenyl-FMN) for 4-hydroxy-3-polyprenylbenzoic acid decarboxylase UbiD. The prenyltransferase is metal-independent and links a dimethylallyl moiety from dimethylallyl monophosphate (DMAP) to the flavin N5 and C6 atoms of FMN. This Saccharolobus solfataricus (strain ATCC 35092 / DSM 1617 / JCM 11322 / P2) (Sulfolobus solfataricus) protein is Flavin prenyltransferase UbiX.